We begin with the raw amino-acid sequence, 107 residues long: MSHQQIIQTLIEWIDEHIDQPLNIDVVAKKSGYSKWYLQRMFRTVTHQTLGEYIRQRRLLLAAVELRTTERPIFDIAMDLGYVSQQTFSRVFRREFDRTPSDYRHRL.

The region spanning 8 to 106 (QTLIEWIDEH…DRTPSDYRHR (99 aa)) is the HTH araC/xylS-type domain. 2 consecutive DNA-binding regions (H-T-H motif) follow at residues 25-46 (DVVA…RTVT) and 73-96 (IFDI…RREF).

Its subcellular location is the cytoplasm. In terms of biological role, transcriptional activator of the superoxide response regulon of E.coli that includes at least 10 genes such as sodA, nfo, zwf and micF. Binds the DNA sequence 5'-GCACN(7)CAA-3'. It also facilitates the subsequent binding of RNA polymerase to the micF and the nfo promoters. The polypeptide is Regulatory protein SoxS (soxS) (Salmonella typhimurium (strain LT2 / SGSC1412 / ATCC 700720)).